An 85-amino-acid chain; its full sequence is Beta-toxin BmKAS (85 aa).

An N-terminal signal peptide occupies residues methionine 1–threonine 19. The LCN-type CS-alpha/beta domain maps to aspartate 20–asparagine 82. Disulfide bonds link cysteine 31–cysteine 81, cysteine 35–cysteine 56, cysteine 42–cysteine 63, and cysteine 46–cysteine 65.

In terms of tissue distribution, expressed by the venom gland.

The protein localises to the secreted. Functionally, beta toxins bind voltage-independently at site-4 of sodium channels (Nav) and shift the voltage of activation toward more negative potentials thereby affecting sodium channel activation and promoting spontaneous and repetitive firing. It binds to distinct receptor sites of mammal and insect voltage-gated sodium channels. It displays antinociceptive effect in rat models, which is due to its specific modulation of sodium channels of sensory neurons. It also significantly stimulates the binding of [3H]-ryanodine to ryanodine receptors on the sarcoplasmic reticulum of the skeletal muscle through an indirect mechanism. And it promotes noradrenaline release from the rat hippocampus slice. The sequence is that of Beta-toxin BmKAS from Olivierus martensii (Manchurian scorpion).